Consider the following 321-residue polypeptide: uncharacterized protein (321 aa).

The 58-residue stretch at 1–58 folds into the HTH lysR-type domain; the sequence is MTPAQLRAYSAVVRLGSVRAAAAELGLSDAGVSMHVAALRKELDDPLFTRTGAGLAFT. The segment at residues 18 to 37 is a DNA-binding region (H-T-H motif); the sequence is VRAAAAELGLSDAGVSMHVA.

Belongs to the LysR transcriptional regulatory family.

This is an uncharacterized protein from Mycobacterium tuberculosis (strain CDC 1551 / Oshkosh).